Consider the following 117-residue polypeptide: Large ribosomal subunit protein uL18 (117 aa).

This sequence belongs to the universal ribosomal protein uL18 family. As to quaternary structure, part of the 50S ribosomal subunit; part of the 5S rRNA/L5/L18/L25 subcomplex. Contacts the 5S and 23S rRNAs.

This is one of the proteins that bind and probably mediate the attachment of the 5S RNA into the large ribosomal subunit, where it forms part of the central protuberance. The sequence is that of Large ribosomal subunit protein uL18 from Yersinia enterocolitica serotype O:8 / biotype 1B (strain NCTC 13174 / 8081).